Reading from the N-terminus, the 458-residue chain is Argininosuccinate lyase (458 aa).

Belongs to the lyase 1 family. Argininosuccinate lyase subfamily.

The protein localises to the cytoplasm. The enzyme catalyses 2-(N(omega)-L-arginino)succinate = fumarate + L-arginine. Its pathway is amino-acid biosynthesis; L-arginine biosynthesis; L-arginine from L-ornithine and carbamoyl phosphate: step 3/3. The protein is Argininosuccinate lyase of Salmonella agona (strain SL483).